The chain runs to 322 residues: Anthranilate phosphoribosyltransferase (322 aa).

5-phospho-alpha-D-ribose 1-diphosphate is bound by residues Gly71, 74 to 75 (GD), Thr79, 81 to 84 (NVST), 99 to 107 (KFGNRSASG), and Ala111. Gly71 contacts anthranilate. Ser83 is a Mg(2+) binding site. An anthranilate-binding site is contributed by Asn102. Arg157 contributes to the anthranilate binding site. Mg(2+)-binding residues include Asp215 and Glu216.

Belongs to the anthranilate phosphoribosyltransferase family. In terms of assembly, homodimer. Mg(2+) serves as cofactor.

The catalysed reaction is N-(5-phospho-beta-D-ribosyl)anthranilate + diphosphate = 5-phospho-alpha-D-ribose 1-diphosphate + anthranilate. The protein operates within amino-acid biosynthesis; L-tryptophan biosynthesis; L-tryptophan from chorismate: step 2/5. Catalyzes the transfer of the phosphoribosyl group of 5-phosphorylribose-1-pyrophosphate (PRPP) to anthranilate to yield N-(5'-phosphoribosyl)-anthranilate (PRA). The sequence is that of Anthranilate phosphoribosyltransferase from Thermoplasma acidophilum (strain ATCC 25905 / DSM 1728 / JCM 9062 / NBRC 15155 / AMRC-C165).